The sequence spans 516 residues: Extracellular endo-inulinase inuB (516 aa).

Residues 1–25 (MLNPKVAYMVWMTCLGLTLPSQAQS) form the signal peptide. Substrate is bound by residues 40 to 43 (WMNE), glutamine 59, tryptophan 67, and 99 to 100 (FT). Glutamate 43 is a catalytic residue. N-linked (GlcNAc...) asparagine glycosylation is present at asparagine 109. Substrate contacts are provided by residues 175-176 (RD) and glutamate 233. N-linked (GlcNAc...) asparagine glycans are attached at residues asparagine 372, asparagine 419, and asparagine 424.

This sequence belongs to the glycosyl hydrolase 32 family.

Its subcellular location is the secreted. It carries out the reaction Endohydrolysis of (2-&gt;1)-beta-D-fructosidic linkages in inulin.. In terms of biological role, endo-inulinase involved in utilization of the plant storage polymer inulin, consisting of fructooligosaccharides with a degree of polymerization (DP) value from 2 to 60. This is Extracellular endo-inulinase inuB (inuB) from Aspergillus niger.